The primary structure comprises 385 residues: cAMP-dependent protein kinase, catalytic subunit-like (385 aa).

The 255-residue stretch at Leu-63–Phe-317 folds into the Protein kinase domain. Residues Ile-69–Val-77 and Lys-92 contribute to the ATP site. Asp-186 serves as the catalytic Proton acceptor. Residues Glu-318–Trp-385 enclose the AGC-kinase C-terminal domain.

It belongs to the protein kinase superfamily. Ser/Thr protein kinase family. cAMP subfamily.

The enzyme catalyses L-seryl-[protein] + ATP = O-phospho-L-seryl-[protein] + ADP + H(+). It catalyses the reaction L-threonyl-[protein] + ATP = O-phospho-L-threonyl-[protein] + ADP + H(+). The sequence is that of cAMP-dependent protein kinase, catalytic subunit-like from Caenorhabditis briggsae.